A 1011-amino-acid chain; its full sequence is E3 ubiquitin-protein ligase mib1 (1011 aa).

In terms of domain architecture, MIB/HERC2 1 spans 6–74 (NNRVMVEGVG…AYDLRIMDSA (69 aa)). The ZZ-type zinc-finger motif lies at 80–132 (HDGTMCDTCRQQPIIGIRWKCAECTNYDLCTVCYHGDKHHLRHRFYRITTPGS). Residues Cys-85, Cys-88, Cys-100, Cys-103, Cys-109, Cys-112, His-118, and His-122 each coordinate Zn(2+). One can recognise an MIB/HERC2 2 domain in the interval 143–221 (SKKITARGIF…MSDLKCVQDA (79 aa)). 9 ANK repeats span residues 430 to 460 (DLNE…DVNG), 463 to 492 (AGHT…DVEA), 496 to 525 (DGDR…DLNA), 529 to 558 (RRQT…HPSL), 562 to 591 (EGDT…DVTI), 595 to 627 (NGFN…IVDE), 631 to 661 (DGYT…NLDI), 665 to 694 (NQQT…KLDI), and 698 to 729 (DGDT…KVDT). 2 RING-type zinc fingers span residues 820–855 (CMVC…LLCK) and 867–902 (CVVC…VQCR). Positions 936 to 963 (QKDKDNTNVNADVQKLQQQLQDIKEQTM) form a coiled coil. An RING-type 3 zinc finger spans residues 964–997 (CPVCLDRLKNMIFMCGHGTCQLCGDRMSECPICR).

It is found in the cytoplasm. The protein resides in the cytoskeleton. It localises to the microtubule organizing center. Its subcellular location is the centrosome. The protein localises to the centriolar satellite. The enzyme catalyses S-ubiquitinyl-[E2 ubiquitin-conjugating enzyme]-L-cysteine + [acceptor protein]-L-lysine = [E2 ubiquitin-conjugating enzyme]-L-cysteine + N(6)-ubiquitinyl-[acceptor protein]-L-lysine.. It participates in protein modification; protein ubiquitination. Functionally, E3 ubiquitin-protein ligase that mediates ubiquitination of Delta receptors, which act as ligands of Notch proteins. Positively regulates the Delta-mediated Notch signaling by ubiquitinating the intracellular domain of Delta, leading to endocytosis of Delta receptors. This is E3 ubiquitin-protein ligase mib1 (mib1) from Xenopus laevis (African clawed frog).